We begin with the raw amino-acid sequence, 147 residues long: uncharacterized protein (147 aa).

The chain crosses the membrane as a helical span at residues 3-23; it reads APMIGMVVLVVVLGLAVLALS.

It to M.leprae ML1147.

Its subcellular location is the membrane. This is an uncharacterized protein from Mycobacterium tuberculosis (strain CDC 1551 / Oshkosh).